A 135-amino-acid polypeptide reads, in one-letter code: UPF0201 protein TON_1346 (135 aa).

The protein belongs to the UPF0201 family.

This chain is UPF0201 protein TON_1346, found in Thermococcus onnurineus (strain NA1).